Consider the following 491-residue polypeptide: Hydroxymethylglutaryl-CoA synthase (491 aa).

The active-site Proton donor/acceptor is Glu-127. The active-site Acyl-thioester intermediate is Cys-159. Positions 159, 201, and 250 each coordinate (3S)-3-hydroxy-3-methylglutaryl-CoA. Residue Ser-276 is modified to Phosphoserine. His-296 functions as the Proton donor/acceptor in the catalytic mechanism. (3S)-3-hydroxy-3-methylglutaryl-CoA-binding residues include His-296, Lys-305, Asn-371, and Ser-405.

The protein belongs to the thiolase-like superfamily. HMG-CoA synthase family.

It carries out the reaction acetoacetyl-CoA + acetyl-CoA + H2O = (3S)-3-hydroxy-3-methylglutaryl-CoA + CoA + H(+). It participates in metabolic intermediate biosynthesis; (R)-mevalonate biosynthesis; (R)-mevalonate from acetyl-CoA: step 2/3. In terms of biological role, hydroxymethylglutaryl-CoA synthase; part of the first module of ergosterol biosynthesis pathway that includes the early steps of the pathway, conserved across all eukaryotes, and which results in the formation of mevalonate from acetyl-coenzyme A (acetyl-CoA). ERG13 condenses acetyl-CoA with acetoacetyl-CoA to form hydroxymethylglutaryl-CoA (HMG-CoA). The first module starts with the action of the cytosolic acetyl-CoA acetyltransferase ERG10 that catalyzes the formation of acetoacetyl-CoA. The hydroxymethylglutaryl-CoA synthase ERG13 then condenses acetyl-CoA with acetoacetyl-CoA to form HMG-CoA. The rate-limiting step of the early module is the reduction to mevalonate by the 3-hydroxy-3-methylglutaryl-coenzyme A (HMG-CoA) reductases HMG1 and HMG2 which are derived from a single ancestral HMGR gene by gene duplication. This chain is Hydroxymethylglutaryl-CoA synthase, found in Saccharomyces cerevisiae (strain ATCC 204508 / S288c) (Baker's yeast).